We begin with the raw amino-acid sequence, 107 residues long: MGRMHAPGKGLSQSALPYRRSVPTWLKLTSDDVKEQIYKLAKKGLTPSQIGVILRDSHGVAQVRFVTGNKILRILKSKGLAPDLPEDLYHLIKKAVAVRKHLERNRK.

The residue at position 27 (Lys-27) is an N6-acetyllysine; alternate. Position 27 is an N6-succinyllysine; alternate (Lys-27). Lys-27 participates in a covalent cross-link: Glycyl lysine isopeptide (Lys-Gly) (interchain with G-Cter in ubiquitin). Ser-30 carries the post-translational modification Phosphoserine. Lys-34 bears the N6-succinyllysine mark. Tyr-38 carries the phosphotyrosine modification. Residue Lys-43 forms a Glycyl lysine isopeptide (Lys-Gly) (interchain with G-Cter in SUMO2) linkage.

Belongs to the universal ribosomal protein uS15 family. In terms of assembly, component of the small ribosomal subunit. Part of the small subunit (SSU) processome, composed of more than 70 proteins and the RNA chaperone small nucleolar RNA (snoRNA) U3. Ubiquitinated at Lys-27 by RNF14 and RNF25 in response to ribosome collisions (ribosome stalling).

The protein localises to the cytoplasm. It is found in the nucleus. The protein resides in the nucleolus. Component of the small ribosomal subunit. The ribosome is a large ribonucleoprotein complex responsible for the synthesis of proteins in the cell. Part of the small subunit (SSU) processome, first precursor of the small eukaryotic ribosomal subunit. During the assembly of the SSU processome in the nucleolus, many ribosome biogenesis factors, an RNA chaperone and ribosomal proteins associate with the nascent pre-rRNA and work in concert to generate RNA folding, modifications, rearrangements and cleavage as well as targeted degradation of pre-ribosomal RNA by the RNA exosome. In Sus scrofa (Pig), this protein is Small ribosomal subunit protein uS15 (RPS13).